The sequence spans 677 residues: Probable serine/threonine-protein kinase mkcF (677 aa).

Residues 1 to 58 (MLYLVATGDYKGPSENHLSFTKGQRIEFLERTENGFIKGKLDGKVGIFPSSLITIETR) enclose the SH3 domain. A disordered region spans residues 72–244 (TETKDDTGSI…SSSSSSTKRR (173 aa)). Residues 79–94 (GSISSSTSTSTSSLTT) are compositionally biased toward low complexity. Positions 105-126 (GEQQPSTSTINGQSSSTSPILQ) are enriched in polar residues. Low complexity predominate over residues 127-146 (SNGTTNTTTSSTSNNNIGDN). A compositionally biased stretch (polar residues) spans 158–174 (TTSNHSKSASRLSVASF). The span at 175–192 (STTTTATTTTTTTTTATS) shows a compositional bias: low complexity. Residues 209–224 (DKKSKDDDKSEKEGLY) show a composition bias toward basic and acidic residues. Over residues 230-240 (SSSSSSSSSSS) the composition is skewed to low complexity. Positions 401 to 646 (IKFTHMVGRG…VDKLMRHPFF (246 aa)) constitute a Protein kinase domain. ATP contacts are provided by residues 407 to 415 (VGRGQYGKV) and Lys-428. Asp-519 (proton acceptor) is an active-site residue.

It belongs to the protein kinase superfamily. Ser/Thr protein kinase family. STE20 subfamily. Mg(2+) is required as a cofactor.

It carries out the reaction L-seryl-[protein] + ATP = O-phospho-L-seryl-[protein] + ADP + H(+). It catalyses the reaction L-threonyl-[protein] + ATP = O-phospho-L-threonyl-[protein] + ADP + H(+). The polypeptide is Probable serine/threonine-protein kinase mkcF (Dictyostelium discoideum (Social amoeba)).